The primary structure comprises 223 residues: uncharacterized protein (223 aa).

The interval 1–30 is disordered; the sequence is MASATVRNVPLLDDDTIPFGEEDEMRDPSR. Acidic residues predominate over residues 12-25; that stretch reads LDDDTIPFGEEDEM. The next 4 membrane-spanning stretches (helical) occupy residues 35 to 55, 56 to 76, 129 to 149, and 154 to 174; these read YTHP…ILIY, MFCG…VLFL, IFWL…LFAL, and FKWL…LYGY.

This sequence belongs to the TVP23 family.

It localises to the membrane. This is an uncharacterized protein from Drosophila melanogaster (Fruit fly).